A 516-amino-acid chain; its full sequence is MTDIHNHKILILDFGSQYTQLIARRVREVGVFCEIFPHDVAADFIKNYQAKGIILSGGPESVYDSDVKAPEIVFELGVPVLGICYGMQTMVMQHGGEVKGADQSEFGKAIINILNLTNNIFSNMEHEQLVWMSHSDKVTQTGEHFEIIASSTNAPVAAVAHKNKPFFGVQFHPETTHTENGKQIIENFVVNICGCDTLWNIENIIENDIKEIKQKVGTDKVILGLSGGVDSSVVAAILHQAIGDQLTCIFVDTGLLRLNEGDQVMQVFAEHMDINVIRINAKNRFLDALRGICDPEQKRKIIGKLFVDIFDEEAAKIENAKWLAQGTIYSDVIESASNNQSKAHVIKSHHNVGGLPKEMKLKLLEPLRELFKDEVRKLGLGLGLPYNMLYRHPFPGPGLGVRILGEIKKEYVETLQKADAIFTEELYKHNLYHDVSQAFGVFLPIKSVGVVGDQRRYEYVIALRAVVSIDFMTATWANLPYDFLSLVSNRIVNEVKQVSRVVYDVTGKPPGTIEWE.

A Glutamine amidotransferase type-1 domain is found at 8 to 198 (KILILDFGSQ…VVNICGCDTL (191 aa)). The active-site Nucleophile is the Cys-84. Residues His-172 and Glu-174 contribute to the active site. The GMPS ATP-PPase domain occupies 199 to 391 (WNIENIIEND…LGLPYNMLYR (193 aa)). 226-232 (SGGVDSS) serves as a coordination point for ATP.

Homodimer.

The enzyme catalyses XMP + L-glutamine + ATP + H2O = GMP + L-glutamate + AMP + diphosphate + 2 H(+). Its pathway is purine metabolism; GMP biosynthesis; GMP from XMP (L-Gln route): step 1/1. In terms of biological role, catalyzes the synthesis of GMP from XMP. This Francisella tularensis subsp. holarctica (strain LVS) protein is GMP synthase [glutamine-hydrolyzing].